Reading from the N-terminus, the 1690-residue chain is rRNA biogenesis protein rrp5 (1690 aa).

Disordered stretches follow at residues 1–42 and 59–90; these read MAGN…GASS and FMESASGTAELSKKTRPKKKGSKKSSKSELDN. Polar residues predominate over residues 11–32; the sequence is ASEGSDSQGNERISSLSANEAT. Residues 72–83 are compositionally biased toward basic residues; it reads KTRPKKKGSKKS. S1 motif domains are found at residues 109–209, 226–289, 306–376, 398–473, 490–559, 579–648, 666–739, 761–830, 866–942, 973–1044, 1053–1122, 1147–1216, and 1236–1307; these read GSLI…LSLK, GSMI…LTAT, GDYI…VSFL, GFIV…LSFQ, GQFV…LTLK, GTQT…VGCR, GSVL…LSLK, GIKY…MSFK, GKIT…ISHR, GDEV…IGPL, GSRL…LSAR, GDIC…MSLK, and GSNL…LGLK. A disordered region spans residues 1313–1424; it reads SDSDISMSDN…EEKDLDEIPS (112 aa). 3 stretches are compositionally biased toward acidic residues: residues 1348–1367, 1390–1400, and 1412–1421; these read QSEEVENLESAGDEDEEEEP, DTEDSEDEEDE, and FDDEEKDLDE. A Phosphothreonine modification is found at T1391. The residue at position 1394 (S1394) is a Phosphoserine. HAT repeat units lie at residues 1420 to 1452, 1526 to 1558, and 1596 to 1628; these read DEIPSTAADFERQLLSSPNSSLLWISYMAYHLN, GKVDLADEYMQLMLKNFKQVPSVWIQYATFLLN, and GDPERGRTIFEGLLSSYPKRLDLWNVLIDMEMK. Phosphoserine is present on residues S1684 and S1686.

In terms of assembly, component of the ribosomal small subunit (SSU) processome.

The protein localises to the nucleus. It localises to the nucleolus. Its function is as follows. Involved in the biogenesis of rRNA. Required for the formation of 18S and 5.8S rRNA. In Schizosaccharomyces pombe (strain 972 / ATCC 24843) (Fission yeast), this protein is rRNA biogenesis protein rrp5.